The chain runs to 474 residues: Bifunctional ribulose 5-phosphate reductase/CDP-ribitol pyrophosphorylase Bcs1 (474 aa).

The tract at residues 1–238 is ribitol-5-phosphate cytidylyltransferase; it reads MNKNKNIGII…DKLFQSRSHF (238 aa). The ribulose-5-phosphate reductase stretch occupies residues 250-474; that stretch reads YDMKDQVLVV…ITNILADLYK (225 aa).

It in the N-terminal section; belongs to the IspD/TarI cytidylyltransferase family. This sequence in the C-terminal section; belongs to the short-chain dehydrogenases/reductases (SDR) family. In terms of assembly, monomer.

It catalyses the reaction D-ribitol 5-phosphate + CTP + H(+) = CDP-L-ribitol + diphosphate. The enzyme catalyses D-ribitol 5-phosphate + NADP(+) = D-ribulose 5-phosphate + NADPH + H(+). The protein operates within capsule biogenesis; capsule polysaccharide biosynthesis. Catalyzes the NADPH-dependent reduction of D-ribulose 5-phosphate to D-ribitol 5-phosphate and the further reaction of D-ribitol 5-phosphate with CTP to form CDP-ribitol. The polypeptide is Bifunctional ribulose 5-phosphate reductase/CDP-ribitol pyrophosphorylase Bcs1 (Haemophilus influenzae).